A 1578-amino-acid polypeptide reads, in one-letter code: Chitinase ChiA (1578 aa).

Positions 1–19 are cleaved as a signal peptide; that stretch reads MKHYYRLLFLLLFPLLASA. The GH18 1 domain maps to 25-466; it reads KKVVGYYAQW…NQVDTSFGSV (442 aa). Residues 26-446 form a GH18N region; that stretch reads KVVGYYAQWS…GGMIWELSQD (421 aa). Chitin-binding positions include 92 to 93 and 119 to 122; these read DA and GGWT. The Proton donor role is filled by glutamate 162. Chitin contacts are provided by residues tyrosine 163, 249-252, and tryptophan 441; that span reads FGYD. In terms of domain architecture, CNA-B spans 485–536; it reads TDVTVELRNASNAVIQTVVSANGNFAFNNLTSGQNYSLTALKATYTFTPVTL. Residues 1142–1462 form a GH18C region; sequence KIILGYAHSW…GLMTWSVNWD (321 aa). One can recognise a GH18 2 domain in the interval 1142–1483; the sequence is KIILGYAHSW…KAYAAYFASQ (342 aa). The Proton donor role is filled by glutamate 1264. The CTD stretch occupies residues 1473–1578; sequence SKAYAAYFAS…KSFKVMNFLN (106 aa).

This sequence belongs to the glycosyl hydrolase 18 family. Chitinase class II subfamily.

Its subcellular location is the secreted. It carries out the reaction Random endo-hydrolysis of N-acetyl-beta-D-glucosaminide (1-&gt;4)-beta-linkages in chitin and chitodextrins.. In terms of biological role, major extracellular chitinase, which is essential for chitin utilization. The protein is Chitinase ChiA (chiA) of Flavobacterium johnsoniae (strain ATCC 17061 / DSM 2064 / JCM 8514 / BCRC 14874 / CCUG 350202 / NBRC 14942 / NCIMB 11054 / UW101) (Cytophaga johnsonae).